A 669-amino-acid polypeptide reads, in one-letter code: Beta-galactosidase (669 aa).

A signal peptide spans 1–24; that stretch reads MDFPGAARLLSLLLVPLLLGPARG. The propeptide occupies 25-29; it reads LRNAS. Asn27 carries N-linked (GlcNAc...) asparagine glycosylation. Positions 84, 130, and 188 each coordinate substrate. Glu189 serves as the catalytic Proton donor. A disulfide bond links Cys196 and Cys231. Residue Asn248 is glycosylated (N-linked (GlcNAc...) asparagine). The active-site Nucleophile is the Glu269. Substrate is bound at residue Tyr334. 4 N-linked (GlcNAc...) asparagine glycosylation sites follow: Asn465, Asn499, Asn547, and Asn557. The cysteines at positions 628 and 636 are disulfide-linked. The interval 649 to 669 is disordered; sequence TPTSSHPLPDLSDRDSGWDRV. A compositionally biased stretch (basic and acidic residues) spans 659 to 669; the sequence is LSDRDSGWDRV.

It belongs to the glycosyl hydrolase 35 family. Homodimer. May form higher multimers.

It localises to the lysosome. The enzyme catalyses Hydrolysis of terminal non-reducing beta-D-galactose residues in beta-D-galactosides.. In terms of biological role, cleaves beta-linked terminal galactosyl residues from gangliosides, glycoproteins, and glycosaminoglycans. This is Beta-galactosidase (GLB1) from Felis catus (Cat).